The primary structure comprises 417 residues: Putative competence-damage inducible protein (417 aa).

The protein belongs to the CinA family.

This Oceanobacillus iheyensis (strain DSM 14371 / CIP 107618 / JCM 11309 / KCTC 3954 / HTE831) protein is Putative competence-damage inducible protein.